A 329-amino-acid polypeptide reads, in one-letter code: Ephrin-B1 (329 aa).

The signal sequence occupies residues 1–20 (MEGLRRLLGLLLVLYRLCSA). Residues 21–226 (LGKNLEPVTW…FFNSKIAVFA (206 aa)) lie on the Extracellular side of the membrane. Residues 23–157 (KNLEPVTWNS…TRSMKIIMKV (135 aa)) form the Ephrin RBD domain. Intrachain disulfides connect cysteine 57/cysteine 94 and cysteine 82/cysteine 146. Residue asparagine 132 is glycosylated (N-linked (GlcNAc...) asparagine). The segment at 163 to 192 (AVPPEQLTTTRPSKEADNTGKIATFGPWNG) is disordered. A glycan (N-linked (GlcNAc...) asparagine) is linked at asparagine 203. Residues 227–247 (AIGAGCVIFILIIIFLVVLLI) traverse the membrane as a helical segment. Residues 248 to 329 (KIRKRHRKHT…QSPANIYYKV (82 aa)) lie on the Cytoplasmic side of the membrane. The PDZ-binding motif lies at 327–329 (YKV).

The protein belongs to the ephrin family. In terms of assembly, interacts with TLE4 through the PDZ-binding motif. In terms of processing, inducible phosphorylation of tyrosine residues in the cytoplasmic domain. Tyrosine phosphorylation inhibits TLE4-binding. As to expression, expressed at low levels in most tissues with highest levels in the kidney, oocytes, ovary and testis.

It is found in the membrane. Cell surface transmembrane ligand for Eph receptors, a family of receptor tyrosine kinases which are crucial for migration, repulsion and adhesion during neuronal, vascular and epithelial development. Binds promiscuously Eph receptors residing on adjacent cells, leading to contact-dependent bidirectional signaling into neighboring cells. The signaling pathway downstream of the receptor is referred to as forward signaling while the signaling pathway downstream of the ephrin ligand is referred to as reverse signaling. May have a role in the developing mesenchymal and nervous tissue. The sequence is that of Ephrin-B1 (efnb1) from Xenopus laevis (African clawed frog).